A 93-amino-acid chain; its full sequence is MALYEMNLSVILFLIGILGFVLNRKNIILMLISIEVMLLAVTLLVLVSSYSFDDILGQTYSIYIIAIAGAESAIGLGILVAYYRLRGNISLRQ.

Helical transmembrane passes span 2–22 (ALYE…GFVL), 27–47 (IILM…LVLV), and 62–82 (IYII…LVAY).

It belongs to the complex I subunit 4L family.

Its subcellular location is the mitochondrion inner membrane. The catalysed reaction is a ubiquinone + NADH + 5 H(+)(in) = a ubiquinol + NAD(+) + 4 H(+)(out). Core subunit of the mitochondrial membrane respiratory chain NADH dehydrogenase (Complex I) that is believed to belong to the minimal assembly required for catalysis. Complex I functions in the transfer of electrons from NADH to the respiratory chain. The immediate electron acceptor for the enzyme is believed to be ubiquinone. In Mycosarcoma maydis (Corn smut fungus), this protein is NADH-ubiquinone oxidoreductase chain 4L (ND4L).